The primary structure comprises 433 residues: Enolase (433 aa).

Q167 contacts (2R)-2-phosphoglycerate. E209 (proton donor) is an active-site residue. Residues D246, E291, and D318 each coordinate Mg(2+). Residues K343, R372, S373, and K394 each coordinate (2R)-2-phosphoglycerate. Catalysis depends on K343, which acts as the Proton acceptor.

The protein belongs to the enolase family. As to quaternary structure, component of the RNA degradosome, a multiprotein complex involved in RNA processing and mRNA degradation. Mg(2+) serves as cofactor.

Its subcellular location is the cytoplasm. The protein resides in the secreted. It localises to the cell surface. It carries out the reaction (2R)-2-phosphoglycerate = phosphoenolpyruvate + H2O. Its pathway is carbohydrate degradation; glycolysis; pyruvate from D-glyceraldehyde 3-phosphate: step 4/5. Its function is as follows. Catalyzes the reversible conversion of 2-phosphoglycerate (2-PG) into phosphoenolpyruvate (PEP). It is essential for the degradation of carbohydrates via glycolysis. The protein is Enolase of Actinobacillus succinogenes (strain ATCC 55618 / DSM 22257 / CCUG 43843 / 130Z).